The following is a 115-amino-acid chain: Parathyroid hormone (115 aa).

The N-terminal stretch at M1–G25 is a signal peptide. The propeptide occupies K26–R31. An important for receptor binding region spans residues R51–G69. The segment at F73–Q115 is disordered.

It belongs to the parathyroid hormone family. As to quaternary structure, interacts with PTH1R (via N-terminal extracellular domain).

The protein resides in the secreted. Its function is as follows. Parathyroid hormone elevates calcium level by dissolving the salts in bone and preventing their renal excretion. Acts by binding to its receptor, PTH1R, activating G protein-coupled receptor signaling. Stimulates [1-14C]-2-deoxy-D-glucose (2DG) transport and glycogen synthesis in osteoblastic cells. In Equus caballus (Horse), this protein is Parathyroid hormone (PTH).